The primary structure comprises 436 residues: MDKFVIRGGNPLIGTVRVSGAKNSALPCMAAAILTEDEVILENIPQVRDIETERKLLTSMGAEVELGYGRAQHRTTISCRVLSDPTAKYEIVKTMRASALVLGPLVARTGLARVSMPGGCAIGARPIDLHIKGLEQMGATIVYEHGYIEARAERLKGAQIHFDKITVTGTEDLMMAAVLAEGETVLENAAREPEVTDLAALLTAMGAQIEGAGTSEIRIQGVEKLHGARHRINPDRIEAGTFLIAGAITGGDLCVSHCNPAHLGAVIAKLEEAGVRIDVLGKDSLRVRSEGHLKPIDVSTEEYPGFPTDMQAQYMALATQAEGTTLVKENIFENRFMHVQELVRMGANIKTAGRIASVRGKTPLSAAAVMCSDLRASASLVLAALVANGESILDRVYNIDRGYEHIEEKLRGVGAQIKRLGNVFNDKREAAQISAS.

22-23 (KN) provides a ligand contact to phosphoenolpyruvate. Arg96 contacts UDP-N-acetyl-alpha-D-glucosamine. The active-site Proton donor is the Cys120. Position 120 is a 2-(S-cysteinyl)pyruvic acid O-phosphothioketal (Cys120). UDP-N-acetyl-alpha-D-glucosamine contacts are provided by residues 125–129 (RPIDL), Asp309, and Ile331.

The protein belongs to the EPSP synthase family. MurA subfamily.

The protein localises to the cytoplasm. The enzyme catalyses phosphoenolpyruvate + UDP-N-acetyl-alpha-D-glucosamine = UDP-N-acetyl-3-O-(1-carboxyvinyl)-alpha-D-glucosamine + phosphate. Its pathway is cell wall biogenesis; peptidoglycan biosynthesis. Cell wall formation. Adds enolpyruvyl to UDP-N-acetylglucosamine. The polypeptide is UDP-N-acetylglucosamine 1-carboxyvinyltransferase (Acidobacterium capsulatum (strain ATCC 51196 / DSM 11244 / BCRC 80197 / JCM 7670 / NBRC 15755 / NCIMB 13165 / 161)).